The following is a 360-amino-acid chain: Photosystem II protein D1 1 (360 aa).

Helical transmembrane passes span 29-46, 118-133, and 142-156; these read YVGW…TAAI, HFLI…QWEL, and WIPV…AATA. Residue His-118 participates in chlorophyll a binding. A pheophytin a-binding site is contributed by Tyr-126. Asp-170 and Glu-189 together coordinate [CaMn4O5] cluster. A helical membrane pass occupies residues 197 to 218; it reads FHMIGVAGVFGGALFSAMHGSL. His-198 contributes to the chlorophyll a binding site. A quinone contacts are provided by residues His-215 and 264-265; that span reads SF. Residue His-215 coordinates Fe cation. Fe cation is bound at residue His-272. A helical membrane pass occupies residues 274–288; that stretch reads FLAAWPVIGIWFAAL. Residues His-332, Glu-333, Asp-342, and Ala-344 each coordinate [CaMn4O5] cluster. A propeptide spanning residues 345-360 is cleaved from the precursor; that stretch reads SGEVQPIALAAPAIAS.

This sequence belongs to the reaction center PufL/M/PsbA/D family. In terms of assembly, PSII is composed of 1 copy each of membrane proteins PsbA, PsbB, PsbC, PsbD, PsbE, PsbF, PsbH, PsbI, PsbJ, PsbK, PsbL, PsbM, PsbT, PsbX, PsbY, PsbZ, Psb30/Ycf12, peripheral proteins PsbO, CyanoQ (PsbQ), PsbU, PsbV and a large number of cofactors. It forms dimeric complexes. Requires The D1/D2 heterodimer binds P680, chlorophylls that are the primary electron donor of PSII, and subsequent electron acceptors. It shares a non-heme iron and each subunit binds pheophytin, quinone, additional chlorophylls, carotenoids and lipids. D1 provides most of the ligands for the Mn4-Ca-O5 cluster of the oxygen-evolving complex (OEC). There is also a Cl(-1) ion associated with D1 and D2, which is required for oxygen evolution. The PSII complex binds additional chlorophylls, carotenoids and specific lipids. as cofactor. Tyr-161 forms a radical intermediate that is referred to as redox-active TyrZ, YZ or Y-Z. In terms of processing, C-terminally processed by CtpA; processing is essential to allow assembly of the oxygen-evolving complex and thus photosynthetic growth.

It is found in the cellular thylakoid membrane. The enzyme catalyses 2 a plastoquinone + 4 hnu + 2 H2O = 2 a plastoquinol + O2. Functionally, photosystem II (PSII) is a light-driven water:plastoquinone oxidoreductase that uses light energy to abstract electrons from H(2)O, generating O(2) and a proton gradient subsequently used for ATP formation. It consists of a core antenna complex that captures photons, and an electron transfer chain that converts photonic excitation into a charge separation. The D1/D2 (PsbA/PsbD) reaction center heterodimer binds P680, the primary electron donor of PSII as well as several subsequent electron acceptors. The sequence is that of Photosystem II protein D1 1 from Trichormus variabilis (strain ATCC 29413 / PCC 7937) (Anabaena variabilis).